A 206-amino-acid chain; its full sequence is Uridine kinase (206 aa).

ATP is bound at residue 11–18 (GGTGSGKS).

This sequence belongs to the uridine kinase family.

The protein localises to the cytoplasm. The enzyme catalyses uridine + ATP = UMP + ADP + H(+). The catalysed reaction is cytidine + ATP = CMP + ADP + H(+). It participates in pyrimidine metabolism; CTP biosynthesis via salvage pathway; CTP from cytidine: step 1/3. The protein operates within pyrimidine metabolism; UMP biosynthesis via salvage pathway; UMP from uridine: step 1/1. In Clostridium botulinum (strain 657 / Type Ba4), this protein is Uridine kinase.